Here is an 81-residue protein sequence, read N- to C-terminus: Cytochrome b559 subunit alpha (81 aa).

A helical transmembrane segment spans residues 21–35 (VIHSITIPSLFVSGW). Residue H23 participates in heme binding.

It belongs to the PsbE/PsbF family. As to quaternary structure, heterodimer of an alpha subunit and a beta subunit. PSII is composed of 1 copy each of membrane proteins PsbA, PsbB, PsbC, PsbD, PsbE, PsbF, PsbH, PsbI, PsbJ, PsbK, PsbL, PsbM, PsbT, PsbX, PsbY, PsbZ, Psb30/Ycf12, at least 3 peripheral proteins of the oxygen-evolving complex and a large number of cofactors. It forms dimeric complexes. It depends on heme b as a cofactor.

It localises to the plastid. The protein resides in the chloroplast thylakoid membrane. In terms of biological role, this b-type cytochrome is tightly associated with the reaction center of photosystem II (PSII). PSII is a light-driven water:plastoquinone oxidoreductase that uses light energy to abstract electrons from H(2)O, generating O(2) and a proton gradient subsequently used for ATP formation. It consists of a core antenna complex that captures photons, and an electron transfer chain that converts photonic excitation into a charge separation. This is Cytochrome b559 subunit alpha from Mesostigma viride (Green alga).